The primary structure comprises 1165 residues: Chromosome partition protein Smc (1165 aa).

Residue 32–39 (PNGSGKSN) participates in ATP binding. The stretch at 161-503 (AGVAEFDRKI…ETQRQVWREA (343 aa)) forms a coiled coil. The SMC hinge domain occupies 518 to 630 (QGVHGLISQL…VFRSLELARR (113 aa)). Coiled coils occupy residues 672–901 (ELAE…LQQR) and 946–1010 (DLSL…DCDT).

The protein belongs to the SMC family. As to quaternary structure, homodimer.

The protein localises to the cytoplasm. In terms of biological role, required for chromosome condensation and partitioning. In Gloeobacter violaceus (strain ATCC 29082 / PCC 7421), this protein is Chromosome partition protein Smc.